Consider the following 114-residue polypeptide: Large ribosomal subunit protein P2v (114 aa).

The interval V74 to D114 is disordered. S103 bears the Phosphoserine mark.

It belongs to the eukaryotic ribosomal protein P1/P2 family. P1 and P2 exist as dimers at the large ribosomal subunit. Phosphorylated.

Plays an important role in the elongation step of protein synthesis. The protein is Large ribosomal subunit protein P2v (RPP2E) of Arabidopsis thaliana (Mouse-ear cress).